The sequence spans 127 residues: Flagellar hook-basal body complex protein FliE (127 aa).

This sequence belongs to the FliE family.

The protein localises to the bacterial flagellum basal body. The chain is Flagellar hook-basal body complex protein FliE from Leptospira interrogans serogroup Icterohaemorrhagiae serovar copenhageni (strain Fiocruz L1-130).